A 471-amino-acid chain; its full sequence is Cysteine--tRNA ligase (471 aa).

Residue Cys-30 coordinates Zn(2+). A 'HIGH' region motif is present at residues Pro-32–Asn-42. Zn(2+)-binding residues include Cys-212, His-237, and Glu-241. A 'KMSKS' region motif is present at residues Lys-270–Ser-274. Residue Lys-273 coordinates ATP.

It belongs to the class-I aminoacyl-tRNA synthetase family. Monomer. The cofactor is Zn(2+).

It localises to the cytoplasm. It catalyses the reaction tRNA(Cys) + L-cysteine + ATP = L-cysteinyl-tRNA(Cys) + AMP + diphosphate. In Leptospira interrogans serogroup Icterohaemorrhagiae serovar copenhageni (strain Fiocruz L1-130), this protein is Cysteine--tRNA ligase.